The following is a 298-amino-acid chain: 33 kDa chaperonin (298 aa).

2 disulfides stabilise this stretch: C237/C239 and C270/C273.

Belongs to the HSP33 family. Post-translationally, under oxidizing conditions two disulfide bonds are formed involving the reactive cysteines. Under reducing conditions zinc is bound to the reactive cysteines and the protein is inactive.

It localises to the cytoplasm. Functionally, redox regulated molecular chaperone. Protects both thermally unfolding and oxidatively damaged proteins from irreversible aggregation. Plays an important role in the bacterial defense system toward oxidative stress. The sequence is that of 33 kDa chaperonin from Enterococcus faecalis (strain ATCC 700802 / V583).